We begin with the raw amino-acid sequence, 207 residues long: FMN-dependent NADH:quinone oxidoreductase 1 (207 aa).

Residues serine 9, 15–17, and 139–142 contribute to the FMN site; these read SIS and TRGG.

The protein belongs to the azoreductase type 1 family. Homodimer. The cofactor is FMN.

The catalysed reaction is 2 a quinone + NADH + H(+) = 2 a 1,4-benzosemiquinone + NAD(+). The enzyme catalyses N,N-dimethyl-1,4-phenylenediamine + anthranilate + 2 NAD(+) = 2-(4-dimethylaminophenyl)diazenylbenzoate + 2 NADH + 2 H(+). Its function is as follows. Quinone reductase that provides resistance to thiol-specific stress caused by electrophilic quinones. In terms of biological role, also exhibits azoreductase activity. Catalyzes the reductive cleavage of the azo bond in aromatic azo compounds to the corresponding amines. In Trichormus variabilis (strain ATCC 29413 / PCC 7937) (Anabaena variabilis), this protein is FMN-dependent NADH:quinone oxidoreductase 1.